A 105-amino-acid polypeptide reads, in one-letter code: U-scoloptoxin(16)-Sm4a (105 aa).

The first 22 residues, Met1–Gly22, serve as a signal peptide directing secretion.

It belongs to the scoloptoxin-16 family. Contains 4 disulfide bonds. As to expression, expressed by the venom gland.

It localises to the secreted. This Scolopendra morsitans (Tanzanian blue ringleg centipede) protein is U-scoloptoxin(16)-Sm4a.